We begin with the raw amino-acid sequence, 308 residues long: Thiohydrolase (308 aa).

Belongs to the polyketide transferase af380 family.

It functions in the pathway mycotoxin biosynthesis. In terms of biological role, thiohydrolase; part of the gene cluster that mediates the biosynthesis of brefeldin A (BFA), a protein transport inhibitor that shows antiviral, antifungal, and antitumor properties. The proposed biosynthesis of BFA involves formation of an acyclic polyketide chain that is differentially tailored throughout the backbone. The highly reducing polyketide synthase Bref-PKS is proposed to synthesize the precisely reduced octaketide precursor, which could then be directly offloaded by the thiohydrolase enzyme Bref-TH followed by a cytochrome P450 monooxygenase-mediated formation of the cyclopentane ring and macrocyclization to afford 7-deoxy BFA. Alternatively, the first ring annulation can also occur on the ACP-tethered intermediate before the thiohydrolase release and lactonization. The C7-hydroxylation by another cytochrome P450 monooxygenase is believed to be the final step in the process to obtain the final structure of BFA. In addition to the HRPKS Bref-PKS and the thiohydrolase Bref-TH, the brefeldin A biosynthesis cluster contains 4 cytochrome p450 monooxygenases (called orf3 to orf6), as well a the probable cluster-specific transcription regulator orf8. The sequence is that of Thiohydrolase from Eupenicillium brefeldianum (Penicillium brefeldianum).